Reading from the N-terminus, the 173-residue chain is Bifunctional protein PyrR (173 aa).

Positions 93-105 (VILVDDVLYTGRT) match the PRPP-binding motif.

It belongs to the purine/pyrimidine phosphoribosyltransferase family. PyrR subfamily. As to quaternary structure, homodimer and homohexamer; in equilibrium.

The enzyme catalyses UMP + diphosphate = 5-phospho-alpha-D-ribose 1-diphosphate + uracil. Its function is as follows. Regulates transcriptional attenuation of the pyrimidine nucleotide (pyr) operon by binding in a uridine-dependent manner to specific sites on pyr mRNA. This disrupts an antiterminator hairpin in the RNA and favors formation of a downstream transcription terminator, leading to a reduced expression of downstream genes. In terms of biological role, also displays a weak uracil phosphoribosyltransferase activity which is not physiologically significant. The chain is Bifunctional protein PyrR from Streptococcus suis (strain 05ZYH33).